A 535-amino-acid polypeptide reads, in one-letter code: GMP synthase [glutamine-hydrolyzing] (535 aa).

The 191-residue stretch at 21–211 (LIVILDFGSQ…VYHICDCEPT (191 aa)) folds into the Glutamine amidotransferase type-1 domain. The active-site Nucleophile is the Cys-98. Catalysis depends on residues His-185 and Glu-187. The GMPS ATP-PPase domain occupies 212-410 (WTTAAFVEEA…LGLPEEIVQR (199 aa)). Position 239 to 245 (239 to 245 (SGGVDSS)) interacts with ATP.

In terms of assembly, homodimer.

It catalyses the reaction XMP + L-glutamine + ATP + H2O = GMP + L-glutamate + AMP + diphosphate + 2 H(+). It participates in purine metabolism; GMP biosynthesis; GMP from XMP (L-Gln route): step 1/1. Its function is as follows. Catalyzes the synthesis of GMP from XMP. The protein is GMP synthase [glutamine-hydrolyzing] of Thermosynechococcus vestitus (strain NIES-2133 / IAM M-273 / BP-1).